The following is a 262-amino-acid chain: Indole-3-glycerol phosphate synthase (262 aa).

It belongs to the TrpC family.

It catalyses the reaction 1-(2-carboxyphenylamino)-1-deoxy-D-ribulose 5-phosphate + H(+) = (1S,2R)-1-C-(indol-3-yl)glycerol 3-phosphate + CO2 + H2O. It functions in the pathway amino-acid biosynthesis; L-tryptophan biosynthesis; L-tryptophan from chorismate: step 4/5. The protein is Indole-3-glycerol phosphate synthase of Bordetella bronchiseptica (strain ATCC BAA-588 / NCTC 13252 / RB50) (Alcaligenes bronchisepticus).